The chain runs to 666 residues: Fructose-1,6-bisphosphatase class 3 (666 aa).

This sequence belongs to the FBPase class 3 family. The cofactor is Mn(2+).

The catalysed reaction is beta-D-fructose 1,6-bisphosphate + H2O = beta-D-fructose 6-phosphate + phosphate. Its pathway is carbohydrate biosynthesis; gluconeogenesis. In Parabacteroides distasonis (strain ATCC 8503 / DSM 20701 / CIP 104284 / JCM 5825 / NCTC 11152), this protein is Fructose-1,6-bisphosphatase class 3.